Reading from the N-terminus, the 426-residue chain is Glutamate-1-semialdehyde 2,1-aminomutase (426 aa).

Lys-265 bears the N6-(pyridoxal phosphate)lysine mark.

The protein belongs to the class-III pyridoxal-phosphate-dependent aminotransferase family. HemL subfamily. As to quaternary structure, homodimer. The cofactor is pyridoxal 5'-phosphate.

Its subcellular location is the cytoplasm. The enzyme catalyses (S)-4-amino-5-oxopentanoate = 5-aminolevulinate. It participates in porphyrin-containing compound metabolism; protoporphyrin-IX biosynthesis; 5-aminolevulinate from L-glutamyl-tRNA(Glu): step 2/2. The polypeptide is Glutamate-1-semialdehyde 2,1-aminomutase (Pseudoalteromonas translucida (strain TAC 125)).